A 1414-amino-acid chain; its full sequence is MVAAATLVLTFAQSPGQISPDTKLDLTANPLRFLARAFNLWNSDLPFGQAQNQAYGYLFPHGTFFLLGDVLGVPGWVTQRLWWALLLTVGFWGVLRVAEALGIGSTPSRLIGAAAFALSPRVLTTLGAISSETLPMMLAPWVLLPVILALRGQHSVRLMAARSAGAVALMGAVNAVATLTGCLAAVIWWACHRPNRLWWRFTAWWLLCGALAVTWWVVALLMLGRISPPFLDFIESSGVTTQWMSLTEMLRGTMSWTPFVAPSATAGASLVTSTTAVLATTVVAAAGLAGLALRTMPARGRLITMLLIGVVLLGLGYSGGLGSPVALQVQAFLDGSGTPLRNLAKLEPVIRLPLALGLVHLLGRIPLPGSAPRAVWVSAFAHPERDKRVAVAIVVLSALAAGTSLAWTARLTPPGSFTAIPQHWHDAAAWLDEHNTDRGRVLVAPGAPFATQVWGNSHDEPLQVLGDNPWGVRDSIPLTPPETIRALDSVQRLFASGRPSPGLADTLARQGISYVVVRNDLDPDTSRSARPILVHRAVEGSPGLTKVAEFGDPVGPGTLEGFVADSGLRPRYPAVEIFRVEPADAGSSQQRSPMHPYLVDSDAMTRVAGAPEALLRLDERRRLNGEPPLGPMLLAADARRAGLPVDGVIVTDTPTAREIDYGRVDDHASAIRTPDDARHTYNRVPDYPSDGADLVYGKWTGGRLSVSSSAADSTALPYVAPATGPAAAIDSDSSTAWVSNALQAAVGQWLQVDFDHPVTNATLTITPSATAVGAQVRRIEIATATGTSSLRFDTAGKPLTIPLPVGETPWVRVTAVATDDGSPGVQFGVTDLAITQYDASGFAHPVTLRHTVEVPGPPAGSVVQQWDLGTELLGRPGCADSPVGVRCAAAMALASEEPVNLSRTLTVPQDTEVQPTVWIRGRQGPNLADLVAQPDTTRAFGDSDPIDVLGSAYAATDGDPRTSWTAPQRVVQFQTPPTLTLKLPRPTEVSGMRIVPGDTEPPAHPTLVAIDLGDGPQMHRLPADGEPRTVTLKPRVTDTVTVSLLAWNDIIDRTSLGFDQLKPPGLAELTVLDGRGAPVGAADAAKNRSRAVALPCGQGPIIAVAGQFIQTSVHTTVGALLDGEPIPARPCRSEPVKLPAGQQELVVSPGAAFIVDGVELPTPAADEIRSAPTTSAETGTWTADRREVRVSAAAQQRVLVVPESVNRGWSAHDPAGAELQSVTVNGWQQGWVVPAGTEGTVTLTFASNMPYRVGLIGGLALLPLLALLALIPVRRPVRAAAPARPWNPGPVLTGAAALVAGTAISGVAGLLVVGAAMGVRILLNRRGAAGEKVWDNVTVVVAAGGLILAGSVLSQYPWRSVDGYVGHTPGVQFLALLSVAFLAASAVRLVNRPEPSEDGRSAKPEHTGASAHAG.

The next 9 helical transmembrane spans lie at 57–77, 81–101, 128–148, 167–187, 203–223, 273–293, 302–322, 352–372, and 389–409; these read YLFP…PGWV, LWWA…AEAL, AISS…PVIL, VALM…AAVI, AWWL…LLML, STTA…GLAL, LITM…GGLG, LPLA…GSAP, and VAVA…AWTA. The F5/8 type C domain maps to 687 to 845; that stretch reads YPSDGADLVY…QYDASGFAHP (159 aa). The next 4 membrane-spanning stretches (helical) occupy residues 1253-1273, 1297-1317, 1333-1353, and 1364-1384; these read VGLI…LIPV, ALVA…GAAM, VWDN…GSVL, and YVGH…FLAA. The tract at residues 1393 to 1414 is disordered; that stretch reads PEPSEDGRSAKPEHTGASAHAG. Basic and acidic residues predominate over residues 1394–1406; sequence EPSEDGRSAKPEH.

It is found in the membrane. The catalysed reaction is Adds an alpha-D-arabinofuranosyl group from trans,octacis-decaprenylphospho-beta-D-arabinofuranose at the 3-O-position of an alpha-(1-&gt;5)-arabinofuranan chain attached to a beta-(1-&gt;5)-galactofuranan chain.. It participates in cell wall biogenesis; cell wall polysaccharide biosynthesis. In terms of biological role, involved in the biosynthesis of the arabinogalactan (AG) region of the mycolylarabinogalactan-peptidoglycan (mAGP) complex, an essential component of the mycobacterial cell wall. Catalyzes the addition of an arabinofuranosyl (Araf) residue from the sugar donor decaprenyl-phospho-arabinose (DPA) on the C-3 of an alpha-(1-&gt;5)-linked Araf from the arabinan backbone of AG. The protein is Alpha-(1-&gt;3)-arabinofuranosyltransferase (aftD) of Mycolicibacterium smegmatis (strain ATCC 700084 / mc(2)155) (Mycobacterium smegmatis).